Consider the following 369-residue polypeptide: DNA replication and repair protein RecF (369 aa).

ATP is bound at residue 30–37 (GDNGSGKT).

This sequence belongs to the RecF family.

Its subcellular location is the cytoplasm. Functionally, the RecF protein is involved in DNA metabolism; it is required for DNA replication and normal SOS inducibility. RecF binds preferentially to single-stranded, linear DNA. It also seems to bind ATP. The polypeptide is DNA replication and repair protein RecF (Pseudomonas aeruginosa (strain UCBPP-PA14)).